The following is a 682-amino-acid chain: Protein ACTIVITY OF BC1 COMPLEX KINASE 1, chloroplastic (682 aa).

The N-terminal 79 residues, 1-79 (MESIHCNSLL…NSTDASVMTT (79 aa)), are a transit peptide targeting the chloroplast. The 332-residue stretch at 236 to 567 (KISSQTIAAA…IQVLFKDGVF (332 aa)) folds into the Protein kinase domain. ATP contacts are provided by residues 242–250 (IAAASLGQV) and K265. The active-site Proton acceptor is D400.

This sequence belongs to the protein kinase superfamily. ADCK protein kinase family. Interacts with ABC1K3 in plastoglobules (PG). In terms of tissue distribution, expressed in all tissues (e.g. especially in leaves) at all developmental stages from seed germination to flowering, except in the root tips.

It localises to the plastid. The protein resides in the chloroplast. The protein localises to the plastoglobule. The enzyme catalyses L-seryl-[protein] + ATP = O-phospho-L-seryl-[protein] + ADP + H(+). It carries out the reaction L-threonyl-[protein] + ATP = O-phospho-L-threonyl-[protein] + ADP + H(+). Its function is as follows. Kinase that can phosphorylate the tocopherol cyclase VTE1, a key enzyme of tocopherol (vitamin E) metabolism and involved in the recycling of oxidated alpha-tocopherol quinone, possibly stabilizing it at plastoglobules. Also regulates plastoglobule protein composition. Prevents photodamage of chloroplasts under continuous red light, thus working in opposition to ABC1K3. Together with ABC1K1, contributes to plastoglobule (PG) function in prenyl-lipid metabolism, stress response, and thylakoid remodeling. Involved in chlorophyll degradation and in the maintenance of the number of chlorophyll-binding photosynthetic thylakoid membranes. Ensures photosynthetic electron transport by regulating the homeostasis of plastoquinone, beta-carotene and xanthophyll lutein, as well as membrane antioxidant tocopherol metabolism. Seems to affect specifically stability or turnover of D1 protein, product of psbA, one of the four core subunits of the photosystem II (PSII). Required for photooxidative stress responses, including the induction of oxidative stress response genes (e.g. FSD1, CSD1, CAT1, and UTG71C1), to prevent photosystem II core and chlorophyll degradations. This Arabidopsis thaliana (Mouse-ear cress) protein is Protein ACTIVITY OF BC1 COMPLEX KINASE 1, chloroplastic.